The primary structure comprises 245 residues: Cell division protein ZapD (245 aa).

The protein belongs to the ZapD family. As to quaternary structure, interacts with FtsZ.

The protein localises to the cytoplasm. In terms of biological role, cell division factor that enhances FtsZ-ring assembly. Directly interacts with FtsZ and promotes bundling of FtsZ protofilaments, with a reduction in FtsZ GTPase activity. The polypeptide is Cell division protein ZapD (Photobacterium profundum (strain SS9)).